Consider the following 142-residue polypeptide: Putative pre-16S rRNA nuclease (142 aa).

It belongs to the YqgF nuclease family.

It is found in the cytoplasm. In terms of biological role, could be a nuclease involved in processing of the 5'-end of pre-16S rRNA. This chain is Putative pre-16S rRNA nuclease, found in Lactobacillus helveticus (strain DPC 4571).